A 303-amino-acid polypeptide reads, in one-letter code: Bifunctional protein FolD (303 aa).

NADP(+)-binding positions include 175–177 and isoleucine 243; that span reads GVS.

It belongs to the tetrahydrofolate dehydrogenase/cyclohydrolase family. As to quaternary structure, homodimer.

It catalyses the reaction (6R)-5,10-methylene-5,6,7,8-tetrahydrofolate + NADP(+) = (6R)-5,10-methenyltetrahydrofolate + NADPH. The catalysed reaction is (6R)-5,10-methenyltetrahydrofolate + H2O = (6R)-10-formyltetrahydrofolate + H(+). Its pathway is one-carbon metabolism; tetrahydrofolate interconversion. In terms of biological role, catalyzes the oxidation of 5,10-methylenetetrahydrofolate to 5,10-methenyltetrahydrofolate and then the hydrolysis of 5,10-methenyltetrahydrofolate to 10-formyltetrahydrofolate. This is Bifunctional protein FolD from Xanthomonas axonopodis pv. citri (strain 306).